The chain runs to 144 residues: Large ribosomal subunit protein uL16 (144 aa).

The protein belongs to the universal ribosomal protein uL16 family. Part of the 50S ribosomal subunit.

In terms of biological role, binds 23S rRNA and is also seen to make contacts with the A and possibly P site tRNAs. The sequence is that of Large ribosomal subunit protein uL16 from Bacillus cereus (strain ATCC 10987 / NRS 248).